The primary structure comprises 434 residues: Methylenetetrahydrofolate--tRNA-(uracil-5-)-methyltransferase TrmFO (434 aa).

G9–G14 lines the FAD pocket.

It belongs to the MnmG family. TrmFO subfamily. The cofactor is FAD.

The protein localises to the cytoplasm. It carries out the reaction uridine(54) in tRNA + (6R)-5,10-methylene-5,6,7,8-tetrahydrofolate + NADH + H(+) = 5-methyluridine(54) in tRNA + (6S)-5,6,7,8-tetrahydrofolate + NAD(+). The enzyme catalyses uridine(54) in tRNA + (6R)-5,10-methylene-5,6,7,8-tetrahydrofolate + NADPH + H(+) = 5-methyluridine(54) in tRNA + (6S)-5,6,7,8-tetrahydrofolate + NADP(+). Functionally, catalyzes the folate-dependent formation of 5-methyl-uridine at position 54 (M-5-U54) in all tRNAs. This is Methylenetetrahydrofolate--tRNA-(uracil-5-)-methyltransferase TrmFO from Listeria monocytogenes serovar 1/2a (strain ATCC BAA-679 / EGD-e).